The primary structure comprises 496 residues: 3-octaprenyl-4-hydroxybenzoate carboxy-lyase (496 aa).

N181 lines the Mn(2+) pocket. Prenylated FMN contacts are provided by residues 184-186 (IYR), 198-200 (RWL), and 203-204 (RG). Residue E247 participates in Mn(2+) binding. The active-site Proton donor is the D296.

The protein belongs to the UbiD family. In terms of assembly, homohexamer. Prenylated FMN serves as cofactor. The cofactor is Mn(2+).

It localises to the cell membrane. The catalysed reaction is a 4-hydroxy-3-(all-trans-polyprenyl)benzoate + H(+) = a 2-(all-trans-polyprenyl)phenol + CO2. Its pathway is cofactor biosynthesis; ubiquinone biosynthesis. Its function is as follows. Catalyzes the decarboxylation of 3-octaprenyl-4-hydroxy benzoate to 2-octaprenylphenol, an intermediate step in ubiquinone biosynthesis. This Azoarcus sp. (strain BH72) protein is 3-octaprenyl-4-hydroxybenzoate carboxy-lyase.